Here is a 267-residue protein sequence, read N- to C-terminus: Hydrolase FUB4 (267 aa).

Residues serine 93, aspartate 183, and histidine 243 each act as charge relay system in the active site.

This sequence belongs to the AB hydrolase 3 family.

It functions in the pathway mycotoxin biosynthesis. Hydrolase; part of the gene cluster that mediates the biosynthesis of fusaric acid, a mycotoxin with low to moderate toxicity to animals and humans, but with high phytotoxic properties. L-aspartate is suggested as fusaric acid amino acid precursor that is activated and further processed to O-acetyl-L-homoserine by cluster enzymes aspartate kinase FUB3 and homoserine O-acetyltransferase FUB5, as well as enzymes of the primary metabolism. The polyketide synthase (PKS) FUB1 generates the triketide trans-2-hexenal which is presumptively released by the hydrolase FUB4 and linked to the NRPS-bound amino acid precursor by NAD(P)-dependent dehydrogenase FUB6. FUB1, FUB4, and the non-canonical NRPS Fub8 may form an enzyme complex. Further processing of the NRPS-bound intermediate might be carried out by FUB6 and the sulfhydrylase FUB7, enabling a spontaneous electrocyclization to close the carbon backbone of fusaric acid. Dihydrofusaric acid is likely to be released via reduction by the thioester reductase (TR) domain of FUB8 whereupon the final oxidation to fusaric acid may (also) be performed by the FMN-dependent dehydrogenase FUB9. This chain is Hydrolase FUB4, found in Fusarium oxysporum f. sp. lycopersici (strain 4287 / CBS 123668 / FGSC 9935 / NRRL 34936) (Fusarium vascular wilt of tomato).